We begin with the raw amino-acid sequence, 649 residues long: Transmembrane and coiled-coil domains protein 1 (649 aa).

Met1 carries the N-acetylmethionine modification. 4 disordered regions span residues 1–37, 58–83, 110–166, and 197–222; these read MEPS…LSKM, HQRR…EVDL, RVPP…PTSS, and LAQT…GIPD. Over 1-587 the chain is Cytoplasmic; the sequence is MEPSGSEQLY…ARNLLGKLIN (587 aa). The span at 20–34 shows a compositional bias: basic and acidic residues; the sequence is QDAEARRQTESEQKL. The span at 64–75 shows a compositional bias: polar residues; that stretch reads SVSPHDVQQIQT. Residues 113–125 show a composition bias toward basic residues; the sequence is PKMKRGTSLHSRR. Over residues 156 to 166 the composition is skewed to low complexity; it reads SSSTTDAPTSS. Residues 197–214 show a composition bias toward polar residues; the sequence is LAQTSSAVASSTDGSIHT. Residues 224 to 310 are a coiled coil; sequence QRTKAAIAHL…KLREVEQNGI (87 aa). Residues Ser378 and Ser410 each carry the phosphoserine modification. The interval 411-433 is disordered; it reads PKYGSEEDCSSATSGSVGANSTT. Over residues 420–433 the composition is skewed to polar residues; that stretch reads SSATSGSVGANSTT. Residues 457–566 are a coiled coil; the sequence is ALLHEVQEIR…KMELQQQQQQ (110 aa). The next 2 helical transmembrane spans lie at 588–608 and 621–641; these read ILLA…NCVV and LFLV…FSYV. Topologically, residues 642 to 649 are cytoplasmic; that stretch reads DRLFSPPR.

Belongs to the TEX28 family. May form homodimers and heterodimers with TMCC2 or TMCC3 via the coiled-coil domains. Interacts with ribosomal proteins RPL4 and RPS6.

The protein resides in the endoplasmic reticulum membrane. Its function is as follows. Endoplasmic reticulum membrane protein that promotes endoplasmic reticulum-associated endosome fission. Localizes to contact sites between the endoplasmic reticulum and endosomes and acts by promoting recruitment of the endoplasmic reticulum to endosome tubules for fission. Endosome membrane fission of early and late endosomes is essential to separate regions destined for lysosomal degradation from carriers to be recycled to the plasma membrane. The chain is Transmembrane and coiled-coil domains protein 1 (Tmcc1) from Mus musculus (Mouse).